Reading from the N-terminus, the 106-residue chain is MRGNIAQLMQQAQKMQENLQRAQEELAKLEVTGSAGGGMVSVTLTGAKECRKVRIDPSILSDQEMAEDLIAAAFNDASNKIDAESKERMGSATAGMQLPPGMKLPF.

The segment at 82–106 (DAESKERMGSATAGMQLPPGMKLPF) is disordered.

This sequence belongs to the YbaB/EbfC family. In terms of assembly, homodimer.

It localises to the cytoplasm. Its subcellular location is the nucleoid. Functionally, binds to DNA and alters its conformation. May be involved in regulation of gene expression, nucleoid organization and DNA protection. In Xanthomonas campestris pv. campestris (strain 8004), this protein is Nucleoid-associated protein XC_3243.